The sequence spans 336 residues: UPF0324 membrane protein spr0034 (336 aa).

A run of 8 helical transmembrane segments spans residues 65–84, 91–113, 118–140, 153–175, 211–233, 249–271, 286–305, and 312–334; these read LLQY…QVFA, PVIL…FFAL, ATLV…APVI, VIFF…LHLS, SATI…LSYW, VFPL…TSLG, FLIV…VAMV, and ILLG…TLIG.

This sequence belongs to the UPF0324 family.

The protein resides in the cell membrane. The protein is UPF0324 membrane protein spr0034 of Streptococcus pneumoniae (strain ATCC BAA-255 / R6).